Consider the following 281-residue polypeptide: Nicotinamide/nicotinic acid mononucleotide adenylyltransferase 1 (281 aa).

Beta-nicotinamide D-ribonucleotide-binding residues include glycine 15 and serine 16. Glycine 15, serine 16, phenylalanine 17, and methionine 23 together coordinate NAD(+). 15 to 17 (GSF) is a binding site for ATP. An ATP-binding site is contributed by histidine 24. Positions 55 and 57 each coordinate beta-nicotinamide D-ribonucleotide. Position 57 (lysine 57) interacts with NAD(+). Position 58 (lysine 58) interacts with ATP. The beta-nicotinamide D-ribonucleotide site is built by tryptophan 92 and threonine 95. NAD(+) is bound by residues tryptophan 92 and threonine 95. The segment at 113–143 (PQQNSPVLEKPGRKRKWAEQKQDISEKKSLE) is disordered. Serine 117 is modified (phosphoserine). Residues 123–129 (PGRKRKW) carry the Nuclear localization signal motif. Residues 129–143 (WAEQKQDISEKKSLE) are compositionally biased toward basic and acidic residues. Glycine 158, aspartate 160, leucine 170, tryptophan 171, glutamate 217, and asparagine 221 together coordinate NAD(+). Position 158-160 (158-160 (GAD)) interacts with ATP. 2 residues coordinate beta-nicotinamide D-ribonucleotide: leucine 170 and tryptophan 171. Residue 226–229 (TKIR) participates in ATP binding.

This sequence belongs to the eukaryotic NMN adenylyltransferase family. In terms of assembly, homohexamer. Interacts with ADPRT/PARP1. The cofactor is Zn(2+). Mg(2+) is required as a cofactor.

The protein resides in the nucleus. The enzyme catalyses beta-nicotinamide D-ribonucleotide + ATP + H(+) = diphosphate + NAD(+). The catalysed reaction is nicotinate beta-D-ribonucleotide + ATP + H(+) = deamido-NAD(+) + diphosphate. The protein operates within cofactor biosynthesis; NAD(+) biosynthesis; NAD(+) from nicotinamide D-ribonucleotide: step 1/1. It participates in cofactor biosynthesis; NAD(+) biosynthesis; deamido-NAD(+) from nicotinate D-ribonucleotide: step 1/1. With respect to regulation, activity is strongly inhibited by galotannin. Inhibited by P1-(adenosine-5')-P4-(nicotinic-acid-riboside-5')-tetraphosphate (Nap4AD). In terms of biological role, catalyzes the formation of NAD(+) from nicotinamide mononucleotide (NMN) and ATP. Can also use the deamidated form; nicotinic acid mononucleotide (NaMN) as substrate with the same efficiency. Can use triazofurin monophosphate (TrMP) as substrate. Also catalyzes the reverse reaction, i.e. the pyrophosphorolytic cleavage of NAD(+). For the pyrophosphorolytic activity, prefers NAD(+) and NaAD as substrates and degrades NADH, nicotinic acid adenine dinucleotide phosphate (NHD) and nicotinamide guanine dinucleotide (NGD) less effectively. Involved in the synthesis of ATP in the nucleus, together with PARP1, PARG and NUDT5. Nuclear ATP generation is required for extensive chromatin remodeling events that are energy-consuming. Fails to cleave phosphorylated dinucleotides NADP(+), NADPH and NaADP(+). Also acts as a cofactor for glutamate and aspartate ADP-ribosylation by directing PARP1 catalytic activity to glutamate and aspartate residues on histones. Protects against axonal degeneration following mechanical or toxic insults. Delays axonal degeneration after axotomy. Results in a &gt;10-fold increase in intact neurites 72 hours after injury. Neural protection does not correlate with cellular NAD(+) levels but may still require enzyme activity. The protein is Nicotinamide/nicotinic acid mononucleotide adenylyltransferase 1 (NMNAT1) of Bos taurus (Bovine).